Reading from the N-terminus, the 171-residue chain is UPF0312 protein SAR2769 (171 aa).

It belongs to the UPF0312 family.

This chain is UPF0312 protein SAR2769, found in Staphylococcus aureus (strain MRSA252).